The sequence spans 155 residues: Ribonuclease H (155 aa).

Residues 1 to 142 (MLKQVEIFTD…CDELARAAAM (142 aa)) form the RNase H type-1 domain. 4 residues coordinate Mg(2+): Asp-10, Glu-48, Asp-70, and Asp-134.

This sequence belongs to the RNase H family. As to quaternary structure, monomer. Mg(2+) is required as a cofactor.

The protein resides in the cytoplasm. It catalyses the reaction Endonucleolytic cleavage to 5'-phosphomonoester.. In terms of biological role, endonuclease that specifically degrades the RNA of RNA-DNA hybrids. The chain is Ribonuclease H from Salmonella paratyphi C (strain RKS4594).